The primary structure comprises 362 residues: Apelin receptor A (362 aa).

Topologically, residues Met-1 to Leu-37 are extracellular. Asn-19 carries an N-linked (GlcNAc...) asparagine glycan. Cystine bridges form between Cys-26–Cys-286 and Cys-108–Cys-185. The chain crosses the membrane as a helical span at residues Leu-38–Phe-58. At Thr-59–Asn-76 the chain is on the cytoplasmic side. A helical membrane pass occupies residues Leu-77–Leu-97. Residues Gly-98 to Leu-110 are Extracellular-facing. A helical transmembrane segment spans residues Ser-111–Phe-131. The Cytoplasmic segment spans residues Asp-132–Ser-151. A helical membrane pass occupies residues Ile-152–Ile-172. Over Leu-173–Asn-199 the chain is Extracellular. Residue Asn-181 is glycosylated (N-linked (GlcNAc...) asparagine). The helical transmembrane segment at Phe-200–Leu-220 threads the bilayer. Topologically, residues Met-221–Arg-248 are cytoplasmic. Residues Leu-249–Ile-269 traverse the membrane as a helical segment. The Extracellular portion of the chain corresponds to Leu-270 to His-296. A helical membrane pass occupies residues Pro-297–Phe-317. Residues Asp-318–Val-362 are Cytoplasmic-facing.

It belongs to the G-protein coupled receptor 1 family. As to expression, expressed in all blood vessels including the posterior cardinal vein, intersomitic veins and the vitelline vein network. At the gastrula stage, exclusively expressed in the mesodermal layer and at the neurula stage in the lateral plate mesoderm. Larval expression is observed in the endothelium of the primary blood vessels and the forming heart.

Its subcellular location is the cell membrane. G protein-coupled receptor for peptide hormones apelin (apln) and apelin receptor early endogenous ligand (apela), that plays a role in the regulation of normal cardiovascular function and fluid homeostasis. When acting as apelin receptor, activates both G(i) protein pathway that inhibits adenylate cyclase activity, and the beta-arrestin pathway that promotes internalization of the receptor. Also functions as mechanoreceptor that is activated by pathological stimuli in a G-protein-independent fashion to induce beta-arrestin signaling, hence eliciting cardiac hypertrophy. However, the presence of apelin ligand blunts cardiac hypertrophic induction from APLNR/APJ on response to pathological stimuli. Plays a key role in early development such as gastrulation, blood vessels formation and heart morphogenesis by acting as a receptor for apela hormone, promoting endoderm and mesendoderm cell migration and regulating the migration of cells fated to become myocardial progenitors, respectively. Promotes angioblast migration toward the embryonic midline, i.e. the position of the future vessel formation, during vasculogenesis. May promote sinus venosus (SV)-derived endothelial cells migration into the developing heart to promote coronary blood vessel development. Required for cardiovascular development, particularly for intersomitic vein angiogenesis by acting as a receptor for apln hormone. Also plays a role in various processes in adults such as regulation of blood vessel formation, blood pressure, heart contractility, and heart failure. Acts upstream of the i/o type of G-alpha proteins in the differentiation of endothelium, erythroid cells, myeloid cells and cardiomyocytes. In Xenopus laevis (African clawed frog), this protein is Apelin receptor A (aplnr-a).